Here is a 375-residue protein sequence, read N- to C-terminus: Trans-enoyl reductase iccB (375 aa).

48–51 (VDAK) contributes to the NADP(+) binding site. Residue 143–150 (AAVATVGL) coordinates substrate. Residues 204–207 (SSAS), tyrosine 222, and 269–270 (LD) each bind NADP(+). 289-293 (TYSQF) is a binding site for substrate. 358–359 (IK) is a binding site for NADP(+).

The protein belongs to the zinc-containing alcohol dehydrogenase family. As to quaternary structure, monomer.

It carries out the reaction N-[(4E,6E,10S,12Z,14E)-6,10-dimethyl-3-oxohexadeca-4,6,12,14-tetraenoyl]-L-tyrosyl-[ACP] = (3E,5S)-3-[(2E,4E,8S,10E,12Z)-1-hydroxy-4,8-dimethyltetradeca-2,4,10,12-tetraen-1-ylidene]-5-[(4-hydroxyphenyl)methyl]pyrrolidine-2,4-dione + holo-[ACP] + H(+). Its pathway is mycotoxin biosynthesis. Trans-enoyl reductase; part of the gene cluster that mediates the biosynthesis of ilicicolin H, a 4-hydroxy-2-pyridonealkaloid that has potent and broad antifungal activities by inhibiting the mitochondrial respiration chain. IccB collaborates with the hybrid PKS-NRPS synthetase iccA to assemble the backbone of ilicicolin H. The PKS portion of iccA and trans-acting enoyl reductase iccB work together to construct an octaketide, and two methyl groups are introduced by the MT domain of iccA during the chain assembly. The nascent chain is then condensed with tyrosine, catalyzed by the iliA C domain, and the resulting PKS-NRPS hybrid is offloaded by the iliA RED domain to form an advanced tetramic acid intermediate. The biosynthesis of ilicicolin H starts with formation of the tetramic acid by the hybrid PKS-NRPS synthetase iccA with the partnering trans-enoyl reductase iccB since iccA lacks a designated enoylreductase (ER) domain. The cytochrome P450 monooxygenase iccC then catalyzes the ring expansion of the tetramate to the acyclic 2-pyridone. The pericyclase iccD further converts the acyclic 2-pyridone into 8-epi-ilicicolin H. Finally, the epimerase iccE converts 8-epi-ilicicolin H into ilicicolin H via epimerization. IccA to iccE are sufficient for ilicicolin H biosynthesis and the roles of the remaining enzymes, iccF, iccG and iccH within the pathway have still to be determined. The polypeptide is Trans-enoyl reductase iccB (Talaromyces variabilis (Penicillium variabile)).